The sequence spans 181 residues: Large ribosomal subunit protein uL5 (181 aa).

It belongs to the universal ribosomal protein uL5 family. In terms of assembly, part of the 50S ribosomal subunit; part of the 5S rRNA/L5/L18/L25 subcomplex. Contacts the 5S rRNA and the P site tRNA. Forms a bridge to the 30S subunit in the 70S ribosome.

In terms of biological role, this is one of the proteins that bind and probably mediate the attachment of the 5S RNA into the large ribosomal subunit, where it forms part of the central protuberance. In the 70S ribosome it contacts protein S13 of the 30S subunit (bridge B1b), connecting the 2 subunits; this bridge is implicated in subunit movement. Contacts the P site tRNA; the 5S rRNA and some of its associated proteins might help stabilize positioning of ribosome-bound tRNAs. This Helicobacter pylori (strain P12) protein is Large ribosomal subunit protein uL5.